A 60-amino-acid chain; its full sequence is Homeobox protein EgHBX4 (60 aa).

Positions 1–60 (SRRERTIYTPEQLEAMEEVFGVNRYPDVSMREELASRLGINESKIQVWFKNRRAKLRNLE) form a DNA-binding region, homeobox.

This sequence belongs to the paired homeobox family. Bicoid subfamily.

It is found in the nucleus. This Echinococcus granulosus (Hydatid tapeworm) protein is Homeobox protein EgHBX4 (HBX4).